The primary structure comprises 207 residues: 2,3-bisphosphoglycerate-dependent phosphoglycerate mutase (207 aa).

Residues R10–N17, T23–G24, R62, E89–Y92, K100, R116–R117, and G160–N161 each bind substrate. Catalysis depends on H11, which acts as the Tele-phosphohistidine intermediate. E89 (proton donor/acceptor) is an active-site residue.

The protein belongs to the phosphoglycerate mutase family. BPG-dependent PGAM subfamily. Homodimer.

The catalysed reaction is (2R)-2-phosphoglycerate = (2R)-3-phosphoglycerate. Its pathway is carbohydrate degradation; glycolysis; pyruvate from D-glyceraldehyde 3-phosphate: step 3/5. Functionally, catalyzes the interconversion of 2-phosphoglycerate and 3-phosphoglycerate. This Bradyrhizobium sp. (strain ORS 278) protein is 2,3-bisphosphoglycerate-dependent phosphoglycerate mutase.